A 424-amino-acid polypeptide reads, in one-letter code: Elongator complex protein 4 (424 aa).

This sequence belongs to the ELP4 family. Component of the elongator complex which consists of ELP1, ELP2, ELP3, ELP4, ELP5 and ELP6. Widely expressed.

It is found in the cytoplasm. Its subcellular location is the nucleus. It functions in the pathway tRNA modification; 5-methoxycarbonylmethyl-2-thiouridine-tRNA biosynthesis. Functionally, component of the elongator complex which is required for multiple tRNA modifications, including mcm5U (5-methoxycarbonylmethyl uridine), mcm5s2U (5-methoxycarbonylmethyl-2-thiouridine), and ncm5U (5-carbamoylmethyl uridine). The elongator complex catalyzes the formation of carboxymethyluridine in the wobble base at position 34 in tRNAs. This chain is Elongator complex protein 4 (ELP4), found in Homo sapiens (Human).